The chain runs to 211 residues: Glycerol-3-phosphate acyltransferase (211 aa).

5 helical membrane-spanning segments follow: residues 8–28, 84–104, 116–136, 145–165, and 170–190; these read YCLALLGGYLLGSIPFGLILT, LALPAGIAAVIGHLFPVWLGF, VLLATAWPVGLICCALWFAVA, AALCAFAFAPLLALAVGGMGL, and LAQSHWQAAAAFMLIAVLVFL.

Belongs to the PlsY family. As to quaternary structure, probably interacts with PlsX.

The protein resides in the cell inner membrane. It catalyses the reaction an acyl phosphate + sn-glycerol 3-phosphate = a 1-acyl-sn-glycero-3-phosphate + phosphate. It functions in the pathway lipid metabolism; phospholipid metabolism. Catalyzes the transfer of an acyl group from acyl-phosphate (acyl-PO(4)) to glycerol-3-phosphate (G3P) to form lysophosphatidic acid (LPA). This enzyme utilizes acyl-phosphate as fatty acyl donor, but not acyl-CoA or acyl-ACP. The chain is Glycerol-3-phosphate acyltransferase from Granulibacter bethesdensis (strain ATCC BAA-1260 / CGDNIH1).